The following is a 577-amino-acid chain: Myb-like protein N (577 aa).

3 disordered regions span residues methionine 1–threonine 23, threonine 206–asparagine 225, and serine 240–serine 264. Positions proline 213–asparagine 225 are enriched in low complexity. HTH myb-type domains follow at residues lysine 403–isoleucine 465 and arginine 466–valine 517. DNA-binding regions (H-T-H motif) lie at residues tryptophan 437–leucine 461 and tryptophan 489–methionine 513. One can recognise a Myb-like domain in the interval proline 518–phenylalanine 570.

The protein resides in the nucleus. The polypeptide is Myb-like protein N (mybN) (Dictyostelium discoideum (Social amoeba)).